A 158-amino-acid polypeptide reads, in one-letter code: MRPPMTLKGVRRLRDELEHLKLVKRPEIINAIAEARAHGDLKENAEYHAAREQQSFIEGRIKQLEGELSHAEVIDVAKLNAGTKIVFGATVTLADLGTDEESRYQIVGDLEADIKQGLVAISSPVARALIGKQEGDTIVIEAPAGRREYEVVAVEYIS.

Residues 45–72 (AEYHAAREQQSFIEGRIKQLEGELSHAE) adopt a coiled-coil conformation.

Belongs to the GreA/GreB family.

In terms of biological role, necessary for efficient RNA polymerase transcription elongation past template-encoded arresting sites. The arresting sites in DNA have the property of trapping a certain fraction of elongating RNA polymerases that pass through, resulting in locked ternary complexes. Cleavage of the nascent transcript by cleavage factors such as GreA or GreB allows the resumption of elongation from the new 3'terminus. GreA releases sequences of 2 to 3 nucleotides. This is Transcription elongation factor GreA from Xylella fastidiosa (strain M12).